The chain runs to 343 residues: Apolipoprotein L6 (343 aa).

A compositionally biased stretch (basic and acidic residues) spans 1–10 (MDNQAERESE). Positions 1–24 (MDNQAERESEAGVGLQRDEDDAPL) are disordered.

This sequence belongs to the apolipoprotein L family. In terms of tissue distribution, widely expressed; highly expressed in the uterus, fetal brain and spinal cord, also detected in heart, liver, lung, colon, spleen, thymus, prostate, placenta, adrenal gland, salivary and mammary gland.

Its subcellular location is the cytoplasm. May affect the movement of lipids in the cytoplasm or allow the binding of lipids to organelles. This chain is Apolipoprotein L6 (APOL6), found in Homo sapiens (Human).